Reading from the N-terminus, the 609-residue chain is All-trans-retinol 13,14-reductase (609 aa).

A signal peptide spans 1–21 (MWITALLLVVLLLVVVHRVYV).

Belongs to the carotenoid/retinoid oxidoreductase family. CrtISO subfamily. NAD(+) is required as a cofactor. It depends on NADP(+) as a cofactor. FAD serves as cofactor. In terms of tissue distribution, highly expressed in liver, kidney and heart.

It is found in the endoplasmic reticulum membrane. The enzyme catalyses all-trans-13,14-dihydroretinol + A = all-trans-retinol + AH2. Functionally, catalyzes the saturation of all-trans-retinol to all-trans-13,14-dihydroretinol. Does not exhibit any activity toward all-trans-retinoic acid, nor 9-cis, 11-cis or 13-cis-retinol isomers. May play a role in the metabolism of vitamin A. Independently of retinol conversion, may regulate liver metabolism upstream of MLXIPL/ChREBP. May play a role in adipocyte differentiation. The polypeptide is All-trans-retinol 13,14-reductase (Retsat) (Rattus norvegicus (Rat)).